Here is a 154-residue protein sequence, read N- to C-terminus: Ascorbate-specific PTS system EIIA component (154 aa).

Positions serine 6–threonine 150 constitute a PTS EIIA type-2 domain. The Tele-phosphohistidine intermediate role is filled by histidine 68. A Phosphohistidine modification is found at histidine 68.

It is found in the cytoplasm. Functionally, the phosphoenolpyruvate-dependent sugar phosphotransferase system (sugar PTS), a major carbohydrate active transport system, catalyzes the phosphorylation of incoming sugar substrates concomitantly with their translocation across the cell membrane. The enzyme II UlaABC PTS system is involved in ascorbate transport. This Escherichia coli O157:H7 protein is Ascorbate-specific PTS system EIIA component (ulaC).